Reading from the N-terminus, the 185-residue chain is MNWRSEHIWVELLKGSRKRGNFFWACILFLGSLGFLSVGISSYLGKNIISILPSQEILFFPQGVVMSFYGIAGLFISSYLCCTILWNVGSDYDRFDRKEGIVCIFRWEFPGIKRRVFLRFLMRDIQSIRIQVKEGLYPRRILYMEIRGQGIIPLTRTDDQFFTPREIEQKAAELAYFLRVPIEVF.

A run of 2 helical transmembrane segments spans residues 21 to 43 and 68 to 90; these read NFFW…ISSY and FYGI…NVGS.

The protein belongs to the Ycf4 family.

Its subcellular location is the plastid. It localises to the chloroplast thylakoid membrane. Its function is as follows. Seems to be required for the assembly of the photosystem I complex. In Aegilops tauschii (Tausch's goatgrass), this protein is Photosystem I assembly protein Ycf4.